Here is a 563-residue protein sequence, read N- to C-terminus: Phosphomethylpyrimidine synthase (563 aa).

Residues Asn180, Met209, Tyr238, His274, 294-296 (SRG), 335-338 (DGLR), and Glu374 contribute to the substrate site. His378 lines the Zn(2+) pocket. Tyr401 is a binding site for substrate. A Zn(2+)-binding site is contributed by His442. Residues Cys522, Cys525, and Cys530 each contribute to the [4Fe-4S] cluster site.

The protein belongs to the ThiC family. It depends on [4Fe-4S] cluster as a cofactor.

It carries out the reaction 5-amino-1-(5-phospho-beta-D-ribosyl)imidazole + S-adenosyl-L-methionine = 4-amino-2-methyl-5-(phosphooxymethyl)pyrimidine + CO + 5'-deoxyadenosine + formate + L-methionine + 3 H(+). The protein operates within cofactor biosynthesis; thiamine diphosphate biosynthesis. Functionally, catalyzes the synthesis of the hydroxymethylpyrimidine phosphate (HMP-P) moiety of thiamine from aminoimidazole ribotide (AIR) in a radical S-adenosyl-L-methionine (SAM)-dependent reaction. The polypeptide is Phosphomethylpyrimidine synthase (Geobacillus thermodenitrificans (strain NG80-2)).